We begin with the raw amino-acid sequence, 591 residues long: 4-coumarate--CoA ligase-like 3 (591 aa).

6 residues coordinate ATP: serine 228, serine 229, glycine 230, threonine 231, serine 232, and lysine 236. Tyrosine 280 contributes to the (E)-4-coumaroyl-AMP binding site. CoA is bound at residue arginine 301. The segment at 303 to 375 (DAGDAVAAIG…QAFPHVDFIQ (73 aa)) is SBD1. Residues alanine 353, glutamine 375, glycine 376, and threonine 380 each coordinate (E)-4-coumaroyl-AMP. ATP is bound by residues glutamine 375, glycine 376, threonine 380, aspartate 459, and arginine 474. The segment at 376–440 (GYGMTESTAV…LHGPGIMKGY (65 aa)) is SBD2. Positions 476 and 480 each coordinate (E)-4-coumaroyl-AMP. Residues lysine 482 and glycine 483 each coordinate CoA. ATP is bound at residue lysine 565.

It belongs to the ATP-dependent AMP-binding enzyme family. Mg(2+) is required as a cofactor.

It carries out the reaction (E)-4-coumarate + ATP + CoA = (E)-4-coumaroyl-CoA + AMP + diphosphate. The enzyme catalyses (E)-4-coumarate + ATP + H(+) = (E)-4-coumaroyl-AMP + diphosphate. It catalyses the reaction (E)-4-coumaroyl-AMP + CoA = (E)-4-coumaroyl-CoA + AMP + H(+). Functionally, carboxylate--CoA ligase that may use 4-coumarate as substrate. Follows a two-step reaction mechanism, wherein the carboxylate substrate first undergoes adenylation by ATP, followed by a thioesterification in the presence of CoA to yield the final CoA thioester. The protein is 4-coumarate--CoA ligase-like 3 (4CLL3) of Oryza sativa subsp. japonica (Rice).